The primary structure comprises 425 residues: Serine--tRNA ligase (425 aa).

Thr233–Glu235 is an L-serine binding site. Arg264–Glu266 is a binding site for ATP. Glu287 contacts L-serine. Glu351–Ser354 is an ATP binding site. Residue Ser385 coordinates L-serine.

It belongs to the class-II aminoacyl-tRNA synthetase family. Type-1 seryl-tRNA synthetase subfamily. As to quaternary structure, homodimer. The tRNA molecule binds across the dimer.

Its subcellular location is the cytoplasm. The catalysed reaction is tRNA(Ser) + L-serine + ATP = L-seryl-tRNA(Ser) + AMP + diphosphate + H(+). It carries out the reaction tRNA(Sec) + L-serine + ATP = L-seryl-tRNA(Sec) + AMP + diphosphate + H(+). It participates in aminoacyl-tRNA biosynthesis; selenocysteinyl-tRNA(Sec) biosynthesis; L-seryl-tRNA(Sec) from L-serine and tRNA(Sec): step 1/1. Catalyzes the attachment of serine to tRNA(Ser). Is also able to aminoacylate tRNA(Sec) with serine, to form the misacylated tRNA L-seryl-tRNA(Sec), which will be further converted into selenocysteinyl-tRNA(Sec). The chain is Serine--tRNA ligase from Prochlorococcus marinus (strain AS9601).